The following is a 250-amino-acid chain: MAVTKLVLVRHGESVWNKENRFTGWTDVELSDKGRNEAQEAGKLLKAEGFTFDYAYTSVLKRAIHTLWNILDEVDQQWLPVEKSWKLNERHYGALQGLNKAETAEKYGDEQVKQWRRGFAVTPPELTKDDDRFPGKDPRYASLTEAELPLTESLALTIDRVTPYWEEVIKPRVASGDKVIIAAHGNSLRALVKYLDNMSEEEILELNIPTAVPLVYEFDENMKPIKRYYLGNAEEIAAKAAAVANQGKAK.

Substrate-binding positions include 10–17 (RHGESVWN), 23–24 (TG), R62, 89–92 (ERHY), K100, 116–117 (RR), and 185–186 (GN). The active-site Tele-phosphohistidine intermediate is H11. E89 functions as the Proton donor/acceptor in the catalytic mechanism.

The protein belongs to the phosphoglycerate mutase family. BPG-dependent PGAM subfamily. In terms of assembly, homodimer.

It carries out the reaction (2R)-2-phosphoglycerate = (2R)-3-phosphoglycerate. It participates in carbohydrate degradation; glycolysis; pyruvate from D-glyceraldehyde 3-phosphate: step 3/5. In terms of biological role, catalyzes the interconversion of 2-phosphoglycerate and 3-phosphoglycerate. This chain is 2,3-bisphosphoglycerate-dependent phosphoglycerate mutase, found in Proteus mirabilis (strain HI4320).